The primary structure comprises 558 residues: Phosphatidylserine lipase ABHD16A (558 aa).

The next 2 helical transmembrane spans lie at 60-80 (ILAL…FAFF) and 93-113 (VVPF…VACL). Residues 114–558 (RGIGRWTNPQ…AQHFQMPWCL (445 aa)) lie on the Cytoplasmic side of the membrane. Positions 281–407 (LVICCEGNAG…LVTRTVRQHL (127 aa)) constitute an AB hydrolase-1 domain. Residues Ser-355, Asp-430, and His-507 each act as charge relay system in the active site.

The protein belongs to the AB hydrolase superfamily. ABHD16 family.

Its subcellular location is the membrane. It catalyses the reaction 1-heptadecanoyl-2-(5Z,8Z,11Z,14Z-eicosatetraenoyl)-sn-glycero-3-phosphoserine + H2O = 1-heptadecanoyl-sn-glycero-3-phosphoserine + (5Z,8Z,11Z,14Z)-eicosatetraenoate + H(+). The enzyme catalyses 1-hexadecanoyl-2-(9Z-octadecenoyl)-sn-glycero-3-phospho-L-serine + H2O = 1-hexadecanoyl-sn-glycero-3-phospho-L-serine + (9Z)-octadecenoate + H(+). The catalysed reaction is 1-octadecanoyl-2-(9Z,12Z-octadecadienoyl)-sn-glycero-3-phosphoserine + H2O = 1-octadecanoyl-sn-glycero-3-phosphoserine + (9Z,12Z)-octadecadienoate + H(+). It carries out the reaction 1-heptadecanoyl-2-(5Z,8Z,11Z,14Z-eicosatetraenoyl)-sn-glycero-3-phosphocholine + H2O = 1-heptadecanoyl-sn-glycero-3-phosphocholine + (5Z,8Z,11Z,14Z)-eicosatetraenoate + H(+). It catalyses the reaction 1-hexadecanoyl-2-(9Z-octadecenoyl)-sn-glycero-3-phosphoglycerol + H2O = 1-hexadecanoyl-sn-glycero-3-phosphoglycerol + (9Z)-octadecenoate + H(+). The enzyme catalyses 1-hexadecanoyl-2-(9Z-octadecenoyl)-sn-glycero-3-phospho-(1D-myo-inositol) + H2O = 1-hexadecanoyl-sn-glycero-3-phospho-(1D-myo-inositol) + (9Z)-octadecenoate + H(+). The catalysed reaction is 1-heptadecanoyl-2-(5Z,8Z,11Z,14Z-eicosatetraenoyl)-sn-glycero-3-phosphoethanolamine + H2O = 1-heptadecanoyl-sn-glycero-3-phosphoethanolamine + (5Z,8Z,11Z,14Z)-eicosatetraenoate + H(+). It carries out the reaction 1-hexadecanoyl-2-(9Z-octadecenoyl)-sn-glycero-3-phospho-(1'-sn-glycerol) + H2O = 1-hexadecanoyl-sn-glycero-3-phospho-(1'-sn-glycerol) + (9Z)-octadecenoate + H(+). It catalyses the reaction Hydrolyzes glycerol monoesters of long-chain fatty acids.. The enzyme catalyses 1-tetradecanoylglycerol + H2O = tetradecanoate + glycerol + H(+). The catalysed reaction is 2-hexadecanoylglycerol + H2O = glycerol + hexadecanoate + H(+). It carries out the reaction 1-(9Z-octadecenoyl)-glycerol + H2O = glycerol + (9Z)-octadecenoate + H(+). It catalyses the reaction 2-(9Z-octadecenoyl)-glycerol + H2O = glycerol + (9Z)-octadecenoate + H(+). The enzyme catalyses 2-(9Z,12Z-octadecadienoyl)-glycerol + H2O = (9Z,12Z)-octadecadienoate + glycerol + H(+). The catalysed reaction is 1-(5Z,8Z,11Z,14Z-eicosatetraenoyl)-glycerol + H2O = glycerol + (5Z,8Z,11Z,14Z)-eicosatetraenoate + H(+). It carries out the reaction 2-(5Z,8Z,11Z,14Z-eicosatetraenoyl)-glycerol + H2O = glycerol + (5Z,8Z,11Z,14Z)-eicosatetraenoate + H(+). It catalyses the reaction prostaglandin D2-1-glycerol ester + H2O = prostaglandin D2 + glycerol + H(+). The enzyme catalyses 2-glyceryl-15-deoxy-Delta(12,14)-prostaglandin J2 + H2O = 15-deoxy-Delta(12,14)-prostaglandin J2 + glycerol + H(+). The catalysed reaction is 1-(9Z,12Z-octadecadienoyl)-glycerol + H2O = (9Z,12Z)-octadecadienoate + glycerol + H(+). Its function is as follows. Phosphatidylserine (PS) lipase that mediates the hydrolysis of phosphatidylserine to generate lysophosphatidylserine (LPS). LPS constitutes a class of signaling lipids that regulates immunological and neurological processes. Has no activity towards diacylglycerol, triacylglycerol or lysophosphatidylserine lipase. Also has monoacylglycerol lipase activity, with preference for 1-(9Z,12Z-octadecadienoyl)-glycerol (1-LG) and 2-glyceryl-15-deoxy-Delta(12,14)-prostaglandin J2 (15d-PGJ(2)-G). The protein is Phosphatidylserine lipase ABHD16A of Rattus norvegicus (Rat).